The sequence spans 521 residues: Cytochrome P450 1A1 (521 aa).

Phe-229 lines the substrate pocket. Cys-463 lines the heme pocket.

Belongs to the cytochrome P450 family. It depends on heme as a cofactor.

The protein localises to the endoplasmic reticulum membrane. It localises to the microsome membrane. The enzyme catalyses an organic molecule + reduced [NADPH--hemoprotein reductase] + O2 = an alcohol + oxidized [NADPH--hemoprotein reductase] + H2O + H(+). Cytochromes P450 are a group of heme-thiolate monooxygenases. They oxidize a variety of structurally unrelated compounds, including steroids, fatty acids, and xenobiotics. The polypeptide is Cytochrome P450 1A1 (cyp1a1) (Pleuronectes platessa (European plaice)).